The following is a 186-amino-acid chain: Single-stranded DNA-binding protein 1 (186 aa).

In terms of domain architecture, SSB spans 1-108 (MDATVTVVGN…LEIDEIGPTL (108 aa)). Residues 120–186 (QAGHGVSPDP…EDFDSDEVPF (67 aa)) form a disordered region. Residues 132–141 (DSQTGQGIDS) show a composition bias toward polar residues. The span at 175–186 (SYEDFDSDEVPF) shows a compositional bias: acidic residues.

Homotetramer.

This Tropheryma whipplei (strain TW08/27) (Whipple's bacillus) protein is Single-stranded DNA-binding protein 1 (ssb1).